The primary structure comprises 474 residues: MKKQLNKITPRNIDFSQWYTDIVLNTKLASYGPVKGTMIFRPYGYRIWELIQKYLDEEFKKVNVDNVYFPLLIPESLFNKEKDHIDGFSPEIATVTRVGQKQLEENLFIRPTSEVLMMDYFSNEINSYRDLPLIYNQWCNVMRWEKTTRPFLRTSEFLWQEGHTVHSSYNEAENFCLKILNIYEKFAKEILLLPVICGKKTEKEKFAGAKDTYTIESLMFDGQALQCGTSHFFADNFTKVYDIKFQNKENKLEHAYSTSWGVSTRLIGALIMTHSDDNGLVLPSKISPIQVQIIQIKNTEQIDQVVEIIKDKLSDYRIDVDNSDKSFGFKISEAEIKGIPIRIEIGPRDLENNQITISRRDQQENKIKVDYKDIKSVVDQMIKDYDLALYNNALENRKNRTFKANTIEEYIEILKQNQGFVLVPFCGRVECEQDIKTKTLTNSRCIPFDQKEVKAKCFNCKKDTCLQVIFARAY.

Belongs to the class-II aminoacyl-tRNA synthetase family. ProS type 3 subfamily. Homodimer.

It localises to the cytoplasm. It catalyses the reaction tRNA(Pro) + L-proline + ATP = L-prolyl-tRNA(Pro) + AMP + diphosphate. Functionally, catalyzes the attachment of proline to tRNA(Pro) in a two-step reaction: proline is first activated by ATP to form Pro-AMP and then transferred to the acceptor end of tRNA(Pro). The chain is Proline--tRNA ligase from Mycoplasma capricolum subsp. capricolum (strain California kid / ATCC 27343 / NCTC 10154).